The chain runs to 397 residues: Calponin-like protein clik-2 (397 aa).

6 Calponin-like repeats span residues 29-54 (LSQQ…RWNI), 73-98 (LRVQ…RFQV), 119-144 (IPKQ…RNQV), 161-189 (LCFQ…RQAT), 209-234 (TPWY…RDVL), and 255-280 (VPLQ…RNTQ). Residues 301-397 (EETKPPGSAS…EEEEEEEEDE (97 aa)) form a disordered region. The segment covering 321–332 (KFEERESSRQSE) has biased composition (basic and acidic residues). 2 stretches are compositionally biased toward acidic residues: residues 344-360 (VEPE…EEKI) and 367-397 (EEEE…EEDE).

This sequence belongs to the calponin family. In terms of tissue distribution, expressed in pharyngeal muscle cells (at protein level).

Functionally, required for pharyngeal pumping. In Caenorhabditis elegans, this protein is Calponin-like protein clik-2.